The primary structure comprises 249 residues: Derlin-2.2 (249 aa).

The Cytoplasmic segment spans residues 1 to 21 (MAQAVEEWYRQMPIITRSYLT). A helical transmembrane segment spans residues 22–42 (AAVVTTVGCTLEIISPYHLYL). At 43–96 (NPKLVVQHYEIWRLVTNFLYFRKMDLDFLFHMFFLARYCKLLEENSFRGRTADF) the chain is on the lumenal side. The helical transmembrane segment at 97–117 (FYMLLFGATVLTGIVLIGGMI) threads the bilayer. Residues 118-122 (PYISE) are Cytoplasmic-facing. The helical transmembrane segment at 123 to 143 (TFARILFLSNSLTFMMVYVWS) threads the bilayer. Residues 144–152 (KHNPFIHMS) are Lumenal-facing. The chain crosses the membrane as a helical span at residues 153–173 (FLGLFTFTAAYLPWVLLGFSI). At 174–249 (LVGSSTWVDL…GAIGVDPQAQ (76 aa)) the chain is on the cytoplasmic side.

It belongs to the derlin family. In terms of tissue distribution, expressed in roots, stalks, leaves, immature ears, embryo and endosperm.

Its subcellular location is the endoplasmic reticulum membrane. Functionally, may be involved in the degradation process of specific misfolded endoplasmic reticulum (ER) luminal proteins. The protein is Derlin-2.2 (DER2.2) of Zea mays (Maize).